The sequence spans 273 residues: Nickel import ATP-binding protein NikE (273 aa).

In terms of domain architecture, ABC transporter spans 13-252 (YRTGGLLRKR…AHPVGRQLQA (240 aa)). Position 45–52 (45–52 (GSSGSGKS)) interacts with ATP.

This sequence belongs to the ABC transporter superfamily. Nickel importer (TC 3.A.1.5.3) family. The complex is composed of two ATP-binding proteins (NikD and NikE), two transmembrane proteins (NikB and NikC) and a solute-binding protein (NikA).

Its subcellular location is the cell inner membrane. It carries out the reaction Ni(2+)(out) + ATP + H2O = Ni(2+)(in) + ADP + phosphate + H(+). Its function is as follows. Part of the ABC transporter complex NikABCDE involved in nickel import. Responsible for energy coupling to the transport system. In Pseudomonas putida (strain ATCC 47054 / DSM 6125 / CFBP 8728 / NCIMB 11950 / KT2440), this protein is Nickel import ATP-binding protein NikE.